Here is a 271-residue protein sequence, read N- to C-terminus: Tetraspanin-11 (271 aa).

Topologically, residues 1–7 (MFRVSNF) are cytoplasmic. A helical transmembrane segment spans residues 8-28 (MVGLANTLVMLVGASAIGYSI). The Extracellular segment spans residues 29 to 44 (YMFVHQGVTDCESAIR). The chain crosses the membrane as a helical span at residues 45–65 (IPLLTTGLILFLVSLLGVIGS). Topologically, residues 66-76 (CFKENLAMVSY) are cytoplasmic. A helical membrane pass occupies residues 77–97 (LIILFGGIVALMIFSIFLFFV). Residues 98–236 (TNKGAGRVVS…LANIREKWRN (139 aa)) lie on the Extracellular side of the membrane. Asparagine 185 and asparagine 195 each carry an N-linked (GlcNAc...) asparagine glycan. Residues 237–257 (LLVFNICLLILLITVYSCGCC) traverse the membrane as a helical segment. Residues 258–271 (ARRNNRTARKSDSV) are Cytoplasmic-facing.

The protein belongs to the tetraspanin (TM4SF) family.

It is found in the membrane. In terms of biological role, may be involved in the regulation of cell differentiation. The polypeptide is Tetraspanin-11 (TET11) (Arabidopsis thaliana (Mouse-ear cress)).